The chain runs to 300 residues: Regulatory protein NocR (300 aa).

Residues 1–59 enclose the HTH lysR-type domain; that stretch reads MIQSRQLEAFRAVMLTGGMTSAANLVRITQPAISRLIRDLEEEIGISLFERTGNRLRPT. Residues 19–38 constitute a DNA-binding region (H-T-H motif); it reads MTSAANLVRITQPAISRLIR.

This sequence belongs to the LysR transcriptional regulatory family.

Functionally, positive regulatory protein for the noc operon involved in nopaline catabolism and uptake. This Agrobacterium fabrum (strain C58 / ATCC 33970) (Agrobacterium tumefaciens (strain C58)) protein is Regulatory protein NocR (nocR).